Consider the following 230-residue polypeptide: Cytidylate kinase (230 aa).

Residue 12–20 (GPSGAGKGT) coordinates ATP.

Belongs to the cytidylate kinase family. Type 1 subfamily.

It localises to the cytoplasm. It catalyses the reaction CMP + ATP = CDP + ADP. It carries out the reaction dCMP + ATP = dCDP + ADP. The protein is Cytidylate kinase of Shewanella sediminis (strain HAW-EB3).